The primary structure comprises 366 residues: Terpene cyclase atmA (366 aa).

Helical transmembrane passes span Phe9–Phe29, Leu84–Ile104, Gly113–Ile133, Gly162–Ala182, Ile195–Phe215, Val233–Val253, Ala291–Trp311, and Ile333–Ile353.

This sequence belongs to the membrane-bound ascI terpene cyclase family.

Its subcellular location is the membrane. Its function is as follows. Aflatrem synthesis protein A; part of the ATM2 gene cluster that mediates the biosynthesis of aflatrem, a tremorgenic mycotoxin with acute neurotoxic effects. Synthesis of geranylgeranyl diphosphate (GGPP) by AtmG (a GGPP synthase) precedes condensation of GGPP with indole 3-glycerol phosphate, followed by epoxidation and cyclization by AtmM (a FAD-dependent monooxygenase) and AtmC (a prenyltransferase) to produce paspaline. AtmB is also essential for paspaline production, but its exact role has not been identified yet. AtmP, a cytochrome P450 monooxygenase, subsequently converts paspaline to 13-desoxypaxilline via PC-M6 by removal of the C-30 methyl group and oxidation at C-10. AtmQ, a cytochrome P450 monooxygenase, then catalyzes the oxidation of 13-desoxypaxilline, first at C-7 to produce paspalicine and then at C-13 to form paspalinine. Finally, AtmD prenylates paspalinine to form aflatrem. The role of atmA in the aflatrem biosynthesis is still unknown. The chain is Terpene cyclase atmA from Aspergillus flavus.